The sequence spans 103 residues: Enhancer of rudimentary homolog (103 aa).

Belongs to the E(R) family. As to quaternary structure, homodimer.

Its function is as follows. May have a role in the cell cycle. The protein is Enhancer of rudimentary homolog of Caenorhabditis elegans.